Reading from the N-terminus, the 502-residue chain is MNLRPEEISSIIKQQIERYDSAVEVVDVGTVIQVGDGIARVHGLEKAMSGELLEFPGGIYGMAMNLEEDNIGCIILGKFTEIREGDQVKRTGRIVEVPVGEAMIGRVVNALGQPIDGKGEIKTDKFRPIENIAPGVVYRKSVHEPLQTGLKSIDAIVPIGRGQRELIIGDRQTGKTAVAVDTIINQKGKDVICIYVAVGQKASTVAGVVKTLADHGAMDYSIVVSATASEPAPMLYIAPYSGCAMGEEFMYNGKHVLIIYDDLTKQAAAYRELSLLLKRPPGREAYPGDVFYLHSRLLERAAKLSPDLGSGSMTALPIIETQAGDVSAYIPTNVISITDGQIFLETDLFNAGFRPAINVGISVSRVGGSAQIKAMKQVAGQLRLDLAQYRELAAFAQFGSDLDKITQMRLTRGERMMEILKQKQYEPMVVEEQVVVLYAAVKGFLDDIPVDKIKSFEEEYLRTMRTTKADLLAKIRTEKALNDELNAEIEKAITEVKEGFLG.

An ATP-binding site is contributed by 169 to 176 (GDRQTGKT).

This sequence belongs to the ATPase alpha/beta chains family. In terms of assembly, F-type ATPases have 2 components, CF(1) - the catalytic core - and CF(0) - the membrane proton channel. CF(1) has five subunits: alpha(3), beta(3), gamma(1), delta(1), epsilon(1). CF(0) has three main subunits: a(1), b(2) and c(9-12). The alpha and beta chains form an alternating ring which encloses part of the gamma chain. CF(1) is attached to CF(0) by a central stalk formed by the gamma and epsilon chains, while a peripheral stalk is formed by the delta and b chains.

It is found in the cell membrane. The enzyme catalyses ATP + H2O + 4 H(+)(in) = ADP + phosphate + 5 H(+)(out). Its function is as follows. Produces ATP from ADP in the presence of a proton gradient across the membrane. The alpha chain is a regulatory subunit. The polypeptide is ATP synthase subunit alpha (Desulfitobacterium hafniense (strain DSM 10664 / DCB-2)).